We begin with the raw amino-acid sequence, 180 residues long: UPF0149 protein XC_0904 (180 aa).

Belongs to the UPF0149 family.

The protein is UPF0149 protein XC_0904 of Xanthomonas campestris pv. campestris (strain 8004).